The sequence spans 60 residues: Small, acid-soluble spore protein C2 (60 aa).

The protein belongs to the alpha/beta-type SASP family. Post-translationally, SASP are degraded in the first minutes of spore germination and provide amino acids for both new protein synthesis and metabolism.

SASP are bound to spore DNA. They are double-stranded DNA-binding proteins that cause DNA to change to an a-like conformation. They protect the DNA backbone from chemical and enzymatic cleavage and are thus involved in dormant spore's high resistance to UV light. This Clostridium perfringens (strain 13 / Type A) protein is Small, acid-soluble spore protein C2 (sspC2).